Here is a 156-residue protein sequence, read N- to C-terminus: MTKKILGLDPGLASLGFGVICTESDNLELLDFGIIQTPAKTDIGKRLQIIYEDLHQVLNTHQPDVVAIEKLFFYRMGNTILVAQARGVVLLVLAQHQLPIIEYTPAQIKLALTGYGAADKVAVQEAVARELCLDCLPRPDDAADALAVALTAWFQR.

Active-site residues include Asp9, Glu69, and Asp141. Asp9, Glu69, and Asp141 together coordinate Mg(2+).

Belongs to the RuvC family. In terms of assembly, homodimer which binds Holliday junction (HJ) DNA. The HJ becomes 2-fold symmetrical on binding to RuvC with unstacked arms; it has a different conformation from HJ DNA in complex with RuvA. In the full resolvosome a probable DNA-RuvA(4)-RuvB(12)-RuvC(2) complex forms which resolves the HJ. Mg(2+) serves as cofactor.

It localises to the cytoplasm. It carries out the reaction Endonucleolytic cleavage at a junction such as a reciprocal single-stranded crossover between two homologous DNA duplexes (Holliday junction).. Functionally, the RuvA-RuvB-RuvC complex processes Holliday junction (HJ) DNA during genetic recombination and DNA repair. Endonuclease that resolves HJ intermediates. Cleaves cruciform DNA by making single-stranded nicks across the HJ at symmetrical positions within the homologous arms, yielding a 5'-phosphate and a 3'-hydroxyl group; requires a central core of homology in the junction. The consensus cleavage sequence is 5'-(A/T)TT(C/G)-3'. Cleavage occurs on the 3'-side of the TT dinucleotide at the point of strand exchange. HJ branch migration catalyzed by RuvA-RuvB allows RuvC to scan DNA until it finds its consensus sequence, where it cleaves and resolves the cruciform DNA. This Acaryochloris marina (strain MBIC 11017) protein is Crossover junction endodeoxyribonuclease RuvC.